Consider the following 754-residue polypeptide: tRNA(Met) cytidine acetyltransferase TmcA (754 aa).

Residues 181–202 form a disordered region; the sequence is GISFDAAPPRVPTEKDRRSPRR. Over residues 192–202 the composition is skewed to basic and acidic residues; it reads PTEKDRRSPRR. Residues glutamine 212, 236 to 245, and arginine 383 contribute to the ATP site; that span reads GRGKSSAAGL. The N-acetyltransferase domain occupies 418-603; it reads VSYRALSPDD…YSALMTRPLS (186 aa). Acetyl-CoA-binding positions include 529 to 531, 536 to 542, and glutamate 568; these read IAT and RSSGLGS.

Belongs to the RNA cytidine acetyltransferase family. TmcA subfamily.

It is found in the cytoplasm. The catalysed reaction is cytidine(34) in elongator tRNA(Met) + acetyl-CoA + ATP + H2O = N(4)-acetylcytidine(34) in elongator tRNA(Met) + ADP + phosphate + CoA + H(+). Functionally, catalyzes the formation of N(4)-acetylcytidine (ac(4)C) at the wobble position of tRNA(Met), by using acetyl-CoA as an acetyl donor and ATP (or GTP). In Haloferax volcanii (strain ATCC 29605 / DSM 3757 / JCM 8879 / NBRC 14742 / NCIMB 2012 / VKM B-1768 / DS2) (Halobacterium volcanii), this protein is tRNA(Met) cytidine acetyltransferase TmcA.